Consider the following 198-residue polypeptide: Segregation and condensation protein B (198 aa).

The disordered stretch occupies residues 167 to 198 (PKLADPEADDPDQNEMDLFFDRFNQSKEQEEE). Residues 172–181 (PEADDPDQNE) show a composition bias toward acidic residues.

Belongs to the ScpB family. In terms of assembly, homodimer. Homodimerization may be required to stabilize the binding of ScpA to the Smc head domains. Component of a cohesin-like complex composed of ScpA, ScpB and the Smc homodimer, in which ScpA and ScpB bind to the head domain of Smc. The presence of the three proteins is required for the association of the complex with DNA.

Its subcellular location is the cytoplasm. Functionally, participates in chromosomal partition during cell division. May act via the formation of a condensin-like complex containing Smc and ScpA that pull DNA away from mid-cell into both cell halves. This Listeria welshimeri serovar 6b (strain ATCC 35897 / DSM 20650 / CCUG 15529 / CIP 8149 / NCTC 11857 / SLCC 5334 / V8) protein is Segregation and condensation protein B.